A 511-amino-acid chain; its full sequence is MTSSTESKHSNDESTDLEKQDAEESHGLPEERKQDIAAQLSSSDVQDPNLVDWDGPDDPANPMNWPKSKRLGHVVMASLTTLFANITSTAFAPAASSLEAEFGITSSITAALTVSIYLLGFAFGPLVIAPLSEHFGRLPVYRVCTVITVAFLIGCAQAKNLGMFLVFRLITGIAGSGPGTIGGGTIADVMAPENRGKAMGAFAMGPLMGPVLGPLMSGFIAQYLDWRWVFRVLCIATGVMTIVLYFVMTETYGPVLLKRKAARLRKETGNPDLHTKLEASGVSPLASLWMALQRPTKMLIFSPITLLLSLYCAFVFGLLILLFTTFSAVYRQQYGFNVSMGGLSYLGLGFGLAIGLVLFGMLSDKVAKKDSARSSEWKPEARLLLMVWFAPVIPGGFFWYGWTAYYKVHWILPMMGTSLIGMGALMVMMPIQVYLVDAFGPRVAASALAANTLLRSLAGCFLPLAGPSLYEALGLGWGNTLLGFIAIGFTCLPILFYRFGGKLRLRFPVTF.

The segment covering 1–35 (MTSSTESKHSNDESTDLEKQDAEESHGLPEERKQD) has biased composition (basic and acidic residues). The segment at 1–65 (MTSSTESKHS…PDDPANPMNW (65 aa)) is disordered. Helical transmembrane passes span 74-94 (VVMA…FAPA), 108-128 (ITAA…PLVI), 147-167 (ITVA…FLVF), 169-189 (LITG…IADV), 201-221 (AFAM…GFIA), 228-248 (WVFR…YFVM), and 303-323 (PITL…ILLF). Residue Asn-337 is glycosylated (N-linked (GlcNAc...) asparagine). 5 helical membrane passes run 342–362 (GLSY…FGML), 383–403 (LLLM…YGWT), 411–431 (ILPM…MMPI), 443–465 (VAAS…LPLA), and 476–496 (GWGN…PILF).

The protein belongs to the major facilitator superfamily.

Its subcellular location is the membrane. Its function is as follows. MFS-type transporper; part of the gene cluster that mediates the biosynthesis of macrophasetins, 3-decalinoyltetramic acids (DTAs) which feature a tetramate (pyrrolidine-2,4-dione) unit connected to a decalin fragment and that have potent bioactivities. Efflux pump that might be required for efficient secretion of macrophasetins. The protein is MFS-type transporper mpsC of Macrophomina phaseolina (strain MS6) (Charcoal rot fungus).